A 137-amino-acid chain; its full sequence is Small ribosomal subunit protein bS6 (137 aa).

A disordered region spans residues 113-137 (EEQREKKNFRKPFIKREEAATKENK). Residues 126-137 (IKREEAATKENK) are compositionally biased toward basic and acidic residues.

Belongs to the bacterial ribosomal protein bS6 family.

Its function is as follows. Binds together with bS18 to 16S ribosomal RNA. The sequence is that of Small ribosomal subunit protein bS6 from Mycoplasma capricolum subsp. capricolum (strain California kid / ATCC 27343 / NCTC 10154).